The following is a 357-amino-acid chain: Tetraacyldisaccharide 4'-kinase (357 aa).

Residue 49–56 participates in ATP binding; sequence TIGGTGKT.

This sequence belongs to the LpxK family.

The catalysed reaction is a lipid A disaccharide + ATP = a lipid IVA + ADP + H(+). The protein operates within glycolipid biosynthesis; lipid IV(A) biosynthesis; lipid IV(A) from (3R)-3-hydroxytetradecanoyl-[acyl-carrier-protein] and UDP-N-acetyl-alpha-D-glucosamine: step 6/6. Its function is as follows. Transfers the gamma-phosphate of ATP to the 4'-position of a tetraacyldisaccharide 1-phosphate intermediate (termed DS-1-P) to form tetraacyldisaccharide 1,4'-bis-phosphate (lipid IVA). This is Tetraacyldisaccharide 4'-kinase from Porphyromonas gingivalis (strain ATCC 33277 / DSM 20709 / CIP 103683 / JCM 12257 / NCTC 11834 / 2561).